Here is a 504-residue protein sequence, read N- to C-terminus: Sperm motility kinase 3A (504 aa).

Residues 28–276 enclose the Protein kinase domain; the sequence is YVMLETIGHG…VAEVMVHPWV (249 aa). ATP is bound by residues 34-42 and Lys57; that span reads IGHGGCATV. Asp147 serves as the catalytic Proton acceptor. The UBA domain occupies 294–334; that stretch reads KPDPAIVKAMGHIGFQAQDIEDSLRQRKFNQTMASYCLLKK. 2 disordered regions span residues 389–421 and 441–468; these read VCGK…MDHT and NSSE…WPRG. The span at 441–451 shows a compositional bias: polar residues; the sequence is NSSEESTQGHT.

The protein belongs to the protein kinase superfamily. CAMK Ser/Thr protein kinase family. Smok subfamily. As to expression, testis-specific. Expressed in the testis from 22 days postpartum (22 dpp).

It catalyses the reaction L-seryl-[protein] + ATP = O-phospho-L-seryl-[protein] + ADP + H(+). It carries out the reaction L-threonyl-[protein] + ATP = O-phospho-L-threonyl-[protein] + ADP + H(+). Functionally, may play a role in sperm motility, especially in the regulation of flagellar function. The protein is Sperm motility kinase 3A of Mus musculus (Mouse).